We begin with the raw amino-acid sequence, 115 residues long: Large ribosomal subunit protein bL19 (115 aa).

This sequence belongs to the bacterial ribosomal protein bL19 family.

Its function is as follows. This protein is located at the 30S-50S ribosomal subunit interface and may play a role in the structure and function of the aminoacyl-tRNA binding site. This Francisella tularensis subsp. holarctica (strain FTNF002-00 / FTA) protein is Large ribosomal subunit protein bL19.